An 882-amino-acid chain; its full sequence is Pentatricopeptide repeat-containing protein At3g03580 (882 aa).

PPR repeat units follow at residues 3 to 37 (TRVSSPFISRALSSSSNLNELRRIHALVISLGLDS), 38 to 68 (SDFFSGKLIDKYSHFREPASSLSVFRRVSPA), 70 to 104 (NVYLWNSIIRAFSKNGLFPEALEFYGKLRESKVSP), 105 to 139 (DKYTFPSVIKACAGLFDAEMGDLVYEQILDMGFES), 140 to 170 (DLFVGNALVDMYSRMGLLTRARQVFDEMPVR), 171 to 205 (DLVSWNSLISGYSSHGYYEEALEIYHELKNSWIVP), 206 to 240 (DSFTVSSVLPAFGNLLVVKQGQGLHGFALKSGVNS), 241 to 271 (VVVVNNGLVAMYLKFRRPTDARRVFDEMDVR), 272 to 307 (DSVSYNTMICGYLKLEMVEESVRMFLENLDQFKPDL), 309 to 340 (TVSSVLRACGHLRDLSLAKYIYNYMLKAGFVL), 341 to 371 (ESTVRNILIDVYAKCGDMITARDVFNSMECK), 372 to 406 (DTVSWNSIISGYIQSGDLMEAMKLFKMMMIMEEQA), 407 to 441 (DHITYLMLISVSTRLADLKFGKGLHSNGIKSGICI), 442 to 472 (DLSVSNALIDMYAKCGEVGDSLKIFSSMGTG), 473 to 507 (DTVTWNTVISACVRFGDFATGLQVTTQMRKSEVVP), 508 to 542 (DMATFLVTLPMCASLAAKRLGKEIHCCLLRFGYES), 543 to 573 (ELQIGNALIEMYSKCGCLENSSRVFERMSRR), 574 to 608 (DVVTWTGMIYAYGMYGEGEKALETFADMEKSGIVP), 609 to 639 (DSVVFIAIIYACSHSGLVDEGLACFEKMKTH), and 645 to 675 (MIEHYACVVDLLSRSQKISKAEEFIQAMPIK). The tract at residues 680–755 (IWASVLRACR…NPGYSWIEVG (76 aa)) is type E motif. The segment at 756 to 786 (KNVHVFSSGDDSAPQSEAIYKSLEILYSLMA) is type E(+) motif. The interval 787-882 (KEGYIPDPRE…DGTCSCKDRW (96 aa)) is type DYW motif.

It belongs to the PPR family. PCMP-H subfamily.

The sequence is that of Pentatricopeptide repeat-containing protein At3g03580 (PCMP-H23) from Arabidopsis thaliana (Mouse-ear cress).